The primary structure comprises 544 residues: Chaperonin GroEL (544 aa).

ATP-binding positions include 29–32 (TLGP), 86–90 (DGTTT), Gly-413, 476–478 (NAA), and Asp-492. The interval 522-544 (PDPNANNNAAAGANPAAGMGGMM) is disordered. Low complexity predominate over residues 524-538 (PNANNNAAAGANPAA).

This sequence belongs to the chaperonin (HSP60) family. In terms of assembly, forms a cylinder of 14 subunits composed of two heptameric rings stacked back-to-back. Interacts with the co-chaperonin GroES.

It is found in the cytoplasm. It catalyses the reaction ATP + H2O + a folded polypeptide = ADP + phosphate + an unfolded polypeptide.. In terms of biological role, together with its co-chaperonin GroES, plays an essential role in assisting protein folding. The GroEL-GroES system forms a nano-cage that allows encapsulation of the non-native substrate proteins and provides a physical environment optimized to promote and accelerate protein folding. In Lacticaseibacillus casei (strain BL23) (Lactobacillus casei), this protein is Chaperonin GroEL.